Consider the following 1111-residue polypeptide: Histone deacetylase 5 (1111 aa).

Residue Lys-35 forms a Glycyl lysine isopeptide (Lys-Gly) (interchain with G-Cter in SUMO2) linkage. 3 disordered regions span residues Gly-40 to Leu-63, Arg-107 to Arg-136, and Lys-187 to Leu-272. A compositionally biased stretch (basic and acidic residues) spans Asp-238 to Ala-249. At Ser-250 the chain carries Phosphoserine; by AMPK, CaMK1, SIK1 and PKD/PRKD1. The segment covering Lys-263–Leu-272 has biased composition (basic and acidic residues). Position 283 is a phosphothreonine; by PKC (Thr-283). A disordered region spans residues Thr-474–Ser-495. Positions Ser-485–Ser-495 are enriched in low complexity. Ser-489 bears the Phosphoserine; by AMPK, CaMK1, SIK1 and PKD/PRKD1 mark. Lys-524 is subject to N6-acetyllysine. 2 disordered regions span residues Thr-527 to Ser-611 and Leu-645 to Thr-666. Over residues Ser-572–Glu-610 the composition is skewed to acidic residues. Phosphoserine is present on residues Ser-600 and Ser-650. A histone deacetylase region spans residues Thr-671 to Gln-1017. 4 residues coordinate Zn(2+): Cys-685, Cys-687, His-693, and Cys-770. The active site involves His-822. The Nuclear export signal signature appears at Glu-1070–Pro-1109. The tract at residues Glu-1086–Leu-1111 is disordered. Ser-1097 carries the post-translational modification Phosphoserine.

Belongs to the histone deacetylase family. HD type 2 subfamily. In terms of assembly, interacts with AHRR, BAHD1, BCOR, HDAC7, HDAC9, CTBP1, MEF2C, NCOR2, NRIP1, PHB2 and a 14-3-3 chaperone protein. Interacts with BCL6, DDIT3/CHOP, GRK5, KDM5B and MYOCD. Interacts with EP300 in the presence of TFAP2C. Interacts with ANKRA2. Interacts with CUL7 (as part of the 3M complex); negatively regulated by ANKRA2. Interacts with ZBTB7B; the interaction allows the recruitment of HDAC4 on CD8 loci for deacetylation and possible inhibition of CD8 genes expression. Interacts with RARA. Phosphorylated by AMPK, CaMK1, SIK1 and PRKD1 at Ser-250 and Ser-489. The phosphorylation is required for the export to the cytoplasm and inhibition. Phosphorylated by the PKC kinases PKN1 and PKN2, impairing nuclear import. Phosphorylated by GRK5, leading to nuclear export of HDAC5 and allowing MEF2-mediated transcription. In terms of processing, ubiquitinated. Polyubiquitination however does not lead to its degradation.

Its subcellular location is the nucleus. The protein resides in the cytoplasm. It carries out the reaction N(6)-acetyl-L-lysyl-[histone] + H2O = L-lysyl-[histone] + acetate. Its function is as follows. Responsible for the deacetylation of lysine residues on the N-terminal part of the core histones (H2A, H2B, H3 and H4). Histone deacetylation gives a tag for epigenetic repression and plays an important role in transcriptional regulation, cell cycle progression and developmental events. Histone deacetylases act via the formation of large multiprotein complexes. Involved in muscle maturation by repressing transcription of myocyte enhancer MEF2C. During muscle differentiation, it shuttles into the cytoplasm, allowing the expression of myocyte enhancer factors. Serves as a corepressor of RARA and causes its deacetylation. In association with RARA, plays a role in the repression of microRNA-10a and thereby in the inflammatory response. The sequence is that of Histone deacetylase 5 (HDAC5) from Cricetulus griseus (Chinese hamster).